The following is a 157-amino-acid chain: N5-carboxyaminoimidazole ribonucleotide mutase (157 aa).

Residues Ser8, Asp11, and Arg38 each contribute to the substrate site.

Belongs to the AIR carboxylase family. Class I subfamily.

It carries out the reaction 5-carboxyamino-1-(5-phospho-D-ribosyl)imidazole + H(+) = 5-amino-1-(5-phospho-D-ribosyl)imidazole-4-carboxylate. Its pathway is purine metabolism; IMP biosynthesis via de novo pathway; 5-amino-1-(5-phospho-D-ribosyl)imidazole-4-carboxylate from 5-amino-1-(5-phospho-D-ribosyl)imidazole (N5-CAIR route): step 2/2. Catalyzes the conversion of N5-carboxyaminoimidazole ribonucleotide (N5-CAIR) to 4-carboxy-5-aminoimidazole ribonucleotide (CAIR). The protein is N5-carboxyaminoimidazole ribonucleotide mutase of Methanocaldococcus jannaschii (strain ATCC 43067 / DSM 2661 / JAL-1 / JCM 10045 / NBRC 100440) (Methanococcus jannaschii).